Reading from the N-terminus, the 242-residue chain is Small ribosomal subunit protein uS2 (242 aa).

It belongs to the universal ribosomal protein uS2 family.

The protein is Small ribosomal subunit protein uS2 of Shewanella frigidimarina (strain NCIMB 400).